The primary structure comprises 227 residues: Lipoprotein-releasing system ATP-binding protein LolD (227 aa).

Positions 8–226 (IEVTNLCKSF…VVHMADGRIT (219 aa)) constitute an ABC transporter domain. Position 44-51 (44-51 (GASGAGKT)) interacts with ATP.

The protein belongs to the ABC transporter superfamily. Lipoprotein translocase (TC 3.A.1.125) family. As to quaternary structure, the complex is composed of two ATP-binding proteins (LolD) and two transmembrane proteins (LolC and LolE).

The protein resides in the cell inner membrane. Functionally, part of the ABC transporter complex LolCDE involved in the translocation of mature outer membrane-directed lipoproteins, from the inner membrane to the periplasmic chaperone, LolA. Responsible for the formation of the LolA-lipoprotein complex in an ATP-dependent manner. This is Lipoprotein-releasing system ATP-binding protein LolD from Syntrophotalea carbinolica (strain DSM 2380 / NBRC 103641 / GraBd1) (Pelobacter carbinolicus).